The primary structure comprises 408 residues: Peptidase T (408 aa).

His-78 contributes to the Zn(2+) binding site. Asp-80 is an active-site residue. Asp-141 serves as a coordination point for Zn(2+). Glu-175 acts as the Proton acceptor in catalysis. Zn(2+) is bound by residues Glu-176, Asp-198, and His-380.

The protein belongs to the peptidase M20B family. Zn(2+) serves as cofactor.

Its subcellular location is the cytoplasm. The enzyme catalyses Release of the N-terminal residue from a tripeptide.. In terms of biological role, cleaves the N-terminal amino acid of tripeptides. The sequence is that of Peptidase T from Clostridium botulinum (strain ATCC 19397 / Type A).